We begin with the raw amino-acid sequence, 129 residues long: L-ectoine synthase (129 aa).

Belongs to the ectoine synthase family.

It carries out the reaction (2S)-4-acetamido-2-aminobutanoate = L-ectoine + H2O. It functions in the pathway amine and polyamine biosynthesis; ectoine biosynthesis; L-ectoine from L-aspartate 4-semialdehyde: step 3/3. Catalyzes the circularization of gamma-N-acetyl-alpha,gamma-diaminobutyric acid (ADABA) to ectoine (1,4,5,6-tetrahydro-2-methyl-4-pyrimidine carboxylic acid), which is an excellent osmoprotectant. The sequence is that of L-ectoine synthase from Halalkalibacterium halodurans (strain ATCC BAA-125 / DSM 18197 / FERM 7344 / JCM 9153 / C-125) (Bacillus halodurans).